A 397-amino-acid chain; its full sequence is MKGAMAWPFLRLYILTLMFFSANAILNVFIPLRGHDLGATNTVIGIVMGAYMLTAMVFRPWAGQIIARVGPIKVLRIILIINAIALIIYGFTGLEGYFVARVMQGVCTAFFSMSLQLGIIDALPEEHRSEGVSLYSLFSTIPNLIGPLVAVGIWNANNISLFAIVIIFIALTTTFFGYRVTFAEQEPDTSDKIEKMPFNAVTVFAQFFKNKELLNSGIIMIVASIVFGAVSTFVPLYTVSLGFANAGIFLTIQAIAVVAARFYLRKYIPSDGMWHPKYMVSVLSLLVIASFVVAFGPQVGAIIFYGSAILIGMTQAMVYPTLTSYLSFVLPKVGRNMLLGLFIACADLGISLGGALMGPISDLVGFKWMYLICGMLVIVIMIMSFLKKPTPRPASSL.

12 helical membrane passes run 12–32 (LYILTLMFFSANAILNVFIPL), 38–58 (GATNTVIGIVMGAYMLTAMVF), 77–97 (IILIINAIALIIYGFTGLEGY), 102–122 (VMQGVCTAFFSMSLQLGIIDA), 134–154 (LYSLFSTIPNLIGPLVAVGIW), 158–178 (NISLFAIVIIFIALTTTFFGY), 217–237 (GIIMIVASIVFGAVSTFVPLY), 239–259 (VSLGFANAGIFLTIQAIAVVA), 285–305 (LLVIASFVVAFGPQVGAIIFY), 309–329 (ILIGMTQAMVYPTLTSYLSFV), 337–357 (MLLGLFIACADLGISLGGALM), and 363–383 (LVGFKWMYLICGMLVIVIMIM).

It belongs to the major facilitator superfamily.

It localises to the cell membrane. Its function is as follows. Involved in the export of the metallophore staphylopine. The sequence is that of Staphylopine export protein from Staphylococcus aureus (strain Mu50 / ATCC 700699).